The following is a 152-amino-acid chain: MAAEGKSLKARAAELLSRREYTRQELVRRLAPFADSEDELNAALDELAASNWQSDDRFARQFASSKGTKFGSRRLAQEMRQRGVDSDTIREALSGQDDLASAREQWRKKFGRLPADAAEKARQYRFLAQRGFPADVIRQVLAGGADDDFYED.

This sequence belongs to the RecX family.

The protein resides in the cytoplasm. Modulates RecA activity. The protein is Regulatory protein RecX of Chromobacterium violaceum (strain ATCC 12472 / DSM 30191 / JCM 1249 / CCUG 213 / NBRC 12614 / NCIMB 9131 / NCTC 9757 / MK).